We begin with the raw amino-acid sequence, 238 residues long: Cysteine-rich venom protein (238 aa).

The first 19 residues, 1-19 (MIAFIVLLSLAAVLQQSSG), serve as a signal peptide directing secretion. A propeptide spanning residues 20-27 (TVDFASES) is cleaved from the precursor. An SCP domain is found at 39-164 (KKHNALRRSV…PTKYLYVCQY (126 aa)). Disulfide bonds link cysteine 75/cysteine 153, cysteine 92/cysteine 165, cysteine 148/cysteine 162, cysteine 184/cysteine 191, cysteine 187/cysteine 196, cysteine 200/cysteine 233, cysteine 209/cysteine 227, and cysteine 218/cysteine 231. Residues 200 to 233 (CKREDDYSNCKSLAEKNKCMEEWMKSKCPASCFC) enclose the ShKT domain.

This sequence belongs to the CRISP family. In terms of tissue distribution, expressed by the venom gland.

It is found in the secreted. Its function is as follows. Blocks olfactory (CNGA2) and retinal (CNGA1) cyclic nucleotide-gated (CNG) ion channel currents. Does not inhibit retinal (CNGA3) currents. It forms high-affinity contacts with the pore turret region and most likely inhibits CNG channel current by blocking the external entrance to the transmembrane pore. Does not affect neither depolarization- nor caffeine-induced contraction arterial smooth muscle. In Demansia vestigiata (Lesser black whip snake), this protein is Cysteine-rich venom protein.